The chain runs to 456 residues: 3-isopropylmalate dehydratase large subunit (456 aa).

3 residues coordinate [4Fe-4S] cluster: Cys336, Cys396, and Cys399.

This sequence belongs to the aconitase/IPM isomerase family. LeuC type 1 subfamily. In terms of assembly, heterodimer of LeuC and LeuD. [4Fe-4S] cluster is required as a cofactor.

The enzyme catalyses (2R,3S)-3-isopropylmalate = (2S)-2-isopropylmalate. It functions in the pathway amino-acid biosynthesis; L-leucine biosynthesis; L-leucine from 3-methyl-2-oxobutanoate: step 2/4. Catalyzes the isomerization between 2-isopropylmalate and 3-isopropylmalate, via the formation of 2-isopropylmaleate. In Staphylococcus aureus (strain JH1), this protein is 3-isopropylmalate dehydratase large subunit.